The following is an 875-amino-acid chain: Alanine--tRNA ligase (875 aa).

Residues His-565, His-569, Cys-666, and His-670 each coordinate Zn(2+).

This sequence belongs to the class-II aminoacyl-tRNA synthetase family. Zn(2+) is required as a cofactor.

Its subcellular location is the cytoplasm. It carries out the reaction tRNA(Ala) + L-alanine + ATP = L-alanyl-tRNA(Ala) + AMP + diphosphate. Catalyzes the attachment of alanine to tRNA(Ala) in a two-step reaction: alanine is first activated by ATP to form Ala-AMP and then transferred to the acceptor end of tRNA(Ala). Also edits incorrectly charged Ser-tRNA(Ala) and Gly-tRNA(Ala) via its editing domain. In Methylibium petroleiphilum (strain ATCC BAA-1232 / LMG 22953 / PM1), this protein is Alanine--tRNA ligase.